A 78-amino-acid chain; its full sequence is Acyl carrier protein (78 aa).

Positions 1 to 76 constitute a Carrier domain; the sequence is MALFEDIQAV…DVVKYIEDNK (76 aa). The residue at position 36 (S36) is an O-(pantetheine 4'-phosphoryl)serine.

Belongs to the acyl carrier protein (ACP) family. 4'-phosphopantetheine is transferred from CoA to a specific serine of apo-ACP by AcpS. This modification is essential for activity because fatty acids are bound in thioester linkage to the sulfhydryl of the prosthetic group.

It localises to the cytoplasm. It participates in lipid metabolism; fatty acid biosynthesis. In terms of biological role, carrier of the growing fatty acid chain in fatty acid biosynthesis. The protein is Acyl carrier protein of Helicobacter pylori (strain ATCC 700392 / 26695) (Campylobacter pylori).